An 841-amino-acid chain; its full sequence is MLGILNKMFDPTKRTLNRYEKIANDIDAIRGDYENLSDDALKHKTIEFKERLEKGATTDDLLVEAFAVVREASRRVTGMFPFKVQLMGGVALHDGNIAEMKTGEGKTLTSTLPVYLNALTGKGVHVVTVNEYLASRDAEQMGKIFEFLGLTVGLNLNSMSKDEKREAYAADITYSTNNELGFDYLRDNMVLYKEQMVQRPLHFAVIDEVDSILIDEARTPLIISGQAAKSTKLYVQANAFVRTLKAEKDYTYDIKTKAVQLTEEGMTKAEKAFGIDNLFDVKHVALNHHINQALKAHVAMQKDVDYVVEDGQVVIVDSFTGRLMKGRRYSEGLHQAIEAKEGLEIQNESMTLATITFQNYFRMYEKLAGMTGTAKTEEEEFRNIYNMQVVTIPTNRPVVRDDRPDLIYRTMEGKFKAVAEDVAQRYMTGQPVLVGTVAVETSELISKLLKNKGIPHQVLNAKNHEREAQIIEEAGQKGAVTIATNMAGRGTDIKLGEGVKELGGLAVVGTERHESRRIDNQLRGRSGRQGDPGITQFYLSMEDELMRRFGAERTMAMLDRFGMDDSTPIQSKMVSRAVESSQKRVEGNNFDSRKQLLQYDDVLRQQREVIYKQRFEVIDSENLREIVENMIKSSLERAIAAYTPREELPEEWKLDGLVDLINTTYLDEGALEKSDIFGKEPDEMLELIMDRIITKYNEKEEQFGKEQMREFEKVIVLRAVDSKWMDHIDAMDQLRQGIHLRAYAQTNPLREYQMEGFAMFEHMIESIEDEVAKFVMKAEIENNLEREEVVQGQTTAHQPQEGDDNKKAKKAPVRKVVDIGRNAPCHCGSGKKYKNCCGRTE.

ATP-binding positions include 79–80 (MF), glutamine 85, 103–107 (GEGKT), and aspartate 492. The disordered stretch occupies residues 786-813 (REEVVQGQTTAHQPQEGDDNKKAKKAPV). Zn(2+)-binding residues include cysteine 825, cysteine 827, cysteine 836, and cysteine 837.

It belongs to the SecA family. As to quaternary structure, part of the essential Sec protein translocation apparatus which comprises SecA, SecYEG and auxiliary proteins SecDF. Other proteins may be involved. Monomer and many different homodimers can be isolated, some of which are not formed in the presence of a synthetic signal peptide. A single SecA monomer interacts with SecY in the channel. Only shows some colocalization with FloA or FloT membrane assemblies. Zn(2+) is required as a cofactor.

The protein resides in the cell membrane. It localises to the cytoplasm. It is found in the membrane raft. The enzyme catalyses ATP + H2O + cellular proteinSide 1 = ADP + phosphate + cellular proteinSide 2.. Its function is as follows. Part of the Sec protein translocase complex. Interacts with the SecYEG preprotein conducting channel. Has a central role in coupling the hydrolysis of ATP to the transfer of proteins into and across the cell membrane, serving as an ATP-driven molecular motor driving the stepwise translocation of polypeptide chains across the membrane. The sequence is that of Protein translocase subunit SecA from Bacillus subtilis (strain 168).